We begin with the raw amino-acid sequence, 227 residues long: KH domain-containing protein MJ0443 (227 aa).

2 consecutive KH domains span residues K14–V77 and D106–V163.

This is KH domain-containing protein MJ0443 from Methanocaldococcus jannaschii (strain ATCC 43067 / DSM 2661 / JAL-1 / JCM 10045 / NBRC 100440) (Methanococcus jannaschii).